Reading from the N-terminus, the 191-residue chain is Protein phosphatase inhibitor 2 (191 aa).

The span at 20 to 31 shows a compositional bias: basic and acidic residues; the sequence is ESNKPVRQKITE. Disordered regions lie at residues 20-52 and 67-191; these read ESNKPVRQKITEPKTPYHPMMDDDGSLSPRGRA and RNVL…PELI. A phosphoserine mark is found at S45 and S47. The span at 93 to 109 shows a compositional bias: acidic residues; the sequence is SDEEEEEADPMDQDEEG. Basic and acidic residues predominate over residues 114–136; the sequence is KNERFNAHRKAHYDEFRKVKELR.

Interacts with protein phosphatase 1. Interacts with TOPP1, SRK2D/SNRK2.2, SRK2I/SNRK2.3, SRK2E/SNRK2.6, SRK2C/SNRK2.8 and PYL11. In terms of processing, phosphorylated in vivo. In terms of tissue distribution, expressed in roots, cotyledons, leaves, flowers and siliques.

The protein resides in the nucleus. It is found in the cytoplasm. Functionally, inhibitor of protein-phosphatase 1 (PP1). Binds to and inhibits PP1 activity. Acts as negative regulator of abscisic acid (ABA) signaling. Enhances the inhibition of SRK2E/SNRK2.6 by TOPP1. May promote the interaction between TOPP1 and the ABA receptor PYL11. The sequence is that of Protein phosphatase inhibitor 2 from Arabidopsis thaliana (Mouse-ear cress).